We begin with the raw amino-acid sequence, 324 residues long: MENYQKIEKIGEGTYGVVYKARDLTHPNRIVALKKIRLEAEDEGVPSTAIREISLLKEMHDPNIVRLLNIVHADGHKLYLVFEFLDLDLKKYMEALPVSEGGRGKALPDGSTLDMNRLGLGEAMVKKFMAQLVEGIRYCHSHRVLHRDLKPQNLLIDREGNLKLADFGLARAFGVPLRTYTHEVVTLWYRAPEILLGGRQYSTGVDMWSVGAIFAEMCTRKPLFPGDSEIDEIFKIFKLLGTPDENTWPGVTSFPDFKASFPKWKREDTRKLVPGLERNGLDLLDAMLEYDPARRISAKQACMHPYFQAGSSAYSGRERLQPYP.

A Protein kinase domain is found at 4–307 (YQKIEKIGEG…AKQACMHPYF (304 aa)). ATP-binding positions include 10-18 (IGEGTYGVV) and Lys-34. Thr-14 is modified (phosphothreonine). Tyr-15 is modified (phosphotyrosine). Asp-148 serves as the catalytic Proton acceptor. Thr-181 is modified (phosphothreonine; by CAK).

This sequence belongs to the protein kinase superfamily. CMGC Ser/Thr protein kinase family. CDC2/CDKX subfamily. As to quaternary structure, forms a stable but non-covalent complex with a regulatory subunit (SUC1) and with a cyclin.

It carries out the reaction L-seryl-[protein] + ATP = O-phospho-L-seryl-[protein] + ADP + H(+). It catalyses the reaction L-threonyl-[protein] + ATP = O-phospho-L-threonyl-[protein] + ADP + H(+). With respect to regulation, phosphorylation at Thr-14 or Tyr-15 inactivates the enzyme, while phosphorylation at Thr-181 activates it. Cyclin-dependent kinase that acts as a master regulator of the mitotic and meiotic cell cycles. In Ajellomyces capsulatus (Darling's disease fungus), this protein is Cyclin-dependent kinase 1.